The following is a 116-amino-acid chain: Flagellar transcriptional regulator FlhD (116 aa).

The protein belongs to the FlhD family. In terms of assembly, homodimer; disulfide-linked. Forms a heterohexamer composed of two FlhC and four FlhD subunits. Each FlhC binds a FlhD dimer, forming a heterotrimer, and a hexamer assembles by dimerization of two heterotrimers.

The protein localises to the cytoplasm. Functions in complex with FlhC as a master transcriptional regulator that regulates transcription of several flagellar and non-flagellar operons by binding to their promoter region. Activates expression of class 2 flagellar genes, including fliA, which is a flagellum-specific sigma factor that turns on the class 3 genes. Also regulates genes whose products function in a variety of physiological pathways. The chain is Flagellar transcriptional regulator FlhD from Enterobacter sp. (strain 22).